We begin with the raw amino-acid sequence, 506 residues long: MQLTLWTYEGPPHIGAMRVAAAMNGLHYVLHAPQGDTYADLLFTMIERRDSRPPVTYTTFQARDLGADTAELFKRAAAEAYARFRPQAMIVGASCTAELLQDDPAGLARALGLPIPVIPLDLPAYQRKENWGASETFYRLVRALAGPPAARPARAVRSCNILGPTALGFRNRDDLREVRQLLDRLGIPVNVVAPLGASPADLARLGEADFNVVLYPEVARAAAQFLERTHRQPFVEIAPIGVRATRAFVEAVAARAGVDPAPVLADEGSRLPWYARSVDSTYLTGKRVFVFGDATHAVAAARVATAELGFALVGLGTYAREFAREVREEAEAHGLTALVSDDYLAVEEAIAAAQPELVLGTQMERHIAKRLGIPCAVISAPMHVQDVPARHAPQMGFEGANVLFDTLVHPLMMGLEEHLLAMFRDDPEFHDGVAPSHLGGTARDLPAAAPQPAALVWAIEAERELKKVPFFVRGKARSNTERFARERSLPLITVETLYDAKAHFSR.

A [4Fe-4S] cluster-binding site is contributed by aspartate 36. Aspartate 279 serves as the catalytic Proton donor. 414 to 415 serves as a coordination point for substrate; it reads GL.

The protein belongs to the ChlB/BchB/BchZ family. Protochlorophyllide reductase is composed of three subunits; BchL, BchN and BchB. Forms a heterotetramer of two BchB and two BchN subunits. It depends on [4Fe-4S] cluster as a cofactor.

The catalysed reaction is chlorophyllide a + oxidized 2[4Fe-4S]-[ferredoxin] + 2 ADP + 2 phosphate = protochlorophyllide a + reduced 2[4Fe-4S]-[ferredoxin] + 2 ATP + 2 H2O. The protein operates within porphyrin-containing compound metabolism; bacteriochlorophyll biosynthesis (light-independent). In terms of biological role, component of the dark-operative protochlorophyllide reductase (DPOR) that uses Mg-ATP and reduced ferredoxin to reduce ring D of protochlorophyllide (Pchlide) to form chlorophyllide a (Chlide). This reaction is light-independent. The NB-protein (BchN-BchB) is the catalytic component of the complex. This is Light-independent protochlorophyllide reductase subunit B from Methylobacterium sp. (strain 4-46).